We begin with the raw amino-acid sequence, 236 residues long: uncharacterized protein (236 aa).

This is an uncharacterized protein from Schizosaccharomyces pombe (strain 972 / ATCC 24843) (Fission yeast).